We begin with the raw amino-acid sequence, 889 residues long: Alanine--tRNA ligase (889 aa).

Residues histidine 569, histidine 573, cysteine 671, and histidine 675 each contribute to the Zn(2+) site.

It belongs to the class-II aminoacyl-tRNA synthetase family. Zn(2+) is required as a cofactor.

The protein resides in the cytoplasm. It catalyses the reaction tRNA(Ala) + L-alanine + ATP = L-alanyl-tRNA(Ala) + AMP + diphosphate. In terms of biological role, catalyzes the attachment of alanine to tRNA(Ala) in a two-step reaction: alanine is first activated by ATP to form Ala-AMP and then transferred to the acceptor end of tRNA(Ala). Also edits incorrectly charged Ser-tRNA(Ala) and Gly-tRNA(Ala) via its editing domain. This is Alanine--tRNA ligase from Parasynechococcus marenigrum (strain WH8102).